The following is a 706-amino-acid chain: ATP-dependent DNA helicase HMI1, mitochondrial (706 aa).

Residues 5–277 (TPSQWKVINK…LKLFDNFRST (273 aa)) enclose the UvrD-like helicase ATP-binding domain. Residues 29–34 (GSGKTL) and Arg275 contribute to the ATP site. Residues 278–593 (PEIISLASKI…KLSTIHSAKG (316 aa)) form the UvrD-like helicase C-terminal domain. The propeptide at 693-706 (YSSLRGCKSVFRRI) is cleaved upon import into mitochondrion.

It belongs to the helicase family. UvrD subfamily. Mg(2+) serves as cofactor.

Its subcellular location is the mitochondrion inner membrane. The enzyme catalyses Couples ATP hydrolysis with the unwinding of duplex DNA by translocating in the 3'-5' direction.. The catalysed reaction is ATP + H2O = ADP + phosphate + H(+). Its function is as follows. Required for mitochondrial genome maintenance and mitochondrial DNA inheritance. In Saccharomyces cerevisiae (strain ATCC 204508 / S288c) (Baker's yeast), this protein is ATP-dependent DNA helicase HMI1, mitochondrial (HMI1).